The sequence spans 554 residues: uncharacterized protein (554 aa).

The N-terminal stretch at 1–33 (MKKILIIILFIIIFIVLIYSGLWFVIMFSLSHS) is a signal peptide.

This is an uncharacterized protein from Rickettsia prowazekii (strain Madrid E).